Here is a 546-residue protein sequence, read N- to C-terminus: Chaperonin GroEL (546 aa).

Residues 30 to 33, Lys-51, 87 to 91, Gly-415, 479 to 481, and Asp-495 each bind ATP; these read TLGP, DGTTT, and NAA. Residues 525-546 are disordered; that stretch reads PEPKKDMPPMPGGGMGGMGGMY. Residues 536 to 546 are compositionally biased toward gly residues; the sequence is GGGMGGMGGMY.

The protein belongs to the chaperonin (HSP60) family. In terms of assembly, forms a cylinder of 14 subunits composed of two heptameric rings stacked back-to-back. Interacts with the co-chaperonin GroES.

The protein localises to the cytoplasm. It carries out the reaction ATP + H2O + a folded polypeptide = ADP + phosphate + an unfolded polypeptide.. Functionally, together with its co-chaperonin GroES, plays an essential role in assisting protein folding. The GroEL-GroES system forms a nano-cage that allows encapsulation of the non-native substrate proteins and provides a physical environment optimized to promote and accelerate protein folding. The protein is Chaperonin GroEL of Solidesulfovibrio magneticus (strain ATCC 700980 / DSM 13731 / RS-1) (Desulfovibrio magneticus).